Consider the following 477-residue polypeptide: 3-isopropylmalate dehydratase large subunit (477 aa).

Cys347, Cys407, and Cys410 together coordinate [4Fe-4S] cluster. The disordered stretch occupies residues 418–442; sequence LAPGERSASTSNRNFEGRQGKGGRT.

This sequence belongs to the aconitase/IPM isomerase family. LeuC type 1 subfamily. As to quaternary structure, heterodimer of LeuC and LeuD. [4Fe-4S] cluster is required as a cofactor.

The enzyme catalyses (2R,3S)-3-isopropylmalate = (2S)-2-isopropylmalate. Its pathway is amino-acid biosynthesis; L-leucine biosynthesis; L-leucine from 3-methyl-2-oxobutanoate: step 2/4. Its function is as follows. Catalyzes the isomerization between 2-isopropylmalate and 3-isopropylmalate, via the formation of 2-isopropylmaleate. In Streptomyces avermitilis (strain ATCC 31267 / DSM 46492 / JCM 5070 / NBRC 14893 / NCIMB 12804 / NRRL 8165 / MA-4680), this protein is 3-isopropylmalate dehydratase large subunit.